A 105-amino-acid polypeptide reads, in one-letter code: Large ribosomal subunit protein bL21 (105 aa).

The protein belongs to the bacterial ribosomal protein bL21 family. As to quaternary structure, part of the 50S ribosomal subunit. Contacts protein L20.

This protein binds to 23S rRNA in the presence of protein L20. The polypeptide is Large ribosomal subunit protein bL21 (Rickettsia africae (strain ESF-5)).